Reading from the N-terminus, the 186-residue chain is Myosin light chain 1, skeletal muscle isoform (186 aa).

Residue M1 is modified to Blocked amino end (Met). The interval 1–26 (MPKAPAKKAEPAPAPAPAPEPAPAPA) is disordered. Over residues 12–26 (APAPAPAPEPAPAPA) the composition is skewed to pro residues. EF-hand domains are found at residues 42 to 77 (DQIEDYREAFGLFDRVGDNKVAYNQIADIMRALGQN) and 119 to 154 (AGFEDYVEGLRVFDKEGNGTVMGAELRIVLSTLGEK).

In terms of assembly, myosin is a hexamer of 2 heavy chains and 4 light chains.

The sequence is that of Myosin light chain 1, skeletal muscle isoform from Chelon ramada (Thin-lipped grey mullet).